A 256-amino-acid polypeptide reads, in one-letter code: tRNA (guanine-N(7)-)-methyltransferase (256 aa).

Positions 1-11 (MHPQDASTEQT) are enriched in polar residues. The interval 1 to 35 (MHPQDASTEQTPVDDDQVESSQPVHAPEDVAHPRR) is disordered. 4 residues coordinate S-adenosyl-L-methionine: glutamate 85, glutamate 110, aspartate 137, and aspartate 160. Residue aspartate 160 is part of the active site. Lysine 164 is a binding site for substrate. The interval 166-171 (RHNKRR) is interaction with RNA. Residues aspartate 196 and 234-237 (TKFE) contribute to the substrate site.

It belongs to the class I-like SAM-binding methyltransferase superfamily. TrmB family.

The catalysed reaction is guanosine(46) in tRNA + S-adenosyl-L-methionine = N(7)-methylguanosine(46) in tRNA + S-adenosyl-L-homocysteine. It functions in the pathway tRNA modification; N(7)-methylguanine-tRNA biosynthesis. Functionally, catalyzes the formation of N(7)-methylguanine at position 46 (m7G46) in tRNA. This is tRNA (guanine-N(7)-)-methyltransferase from Cupriavidus pinatubonensis (strain JMP 134 / LMG 1197) (Cupriavidus necator (strain JMP 134)).